The chain runs to 341 residues: UDP-3-O-(3-hydroxymyristoyl)glucosamine N-acyltransferase (341 aa).

His-239 serves as the catalytic Proton acceptor.

Belongs to the transferase hexapeptide repeat family. LpxD subfamily. In terms of assembly, homotrimer.

It carries out the reaction a UDP-3-O-[(3R)-3-hydroxyacyl]-alpha-D-glucosamine + a (3R)-hydroxyacyl-[ACP] = a UDP-2-N,3-O-bis[(3R)-3-hydroxyacyl]-alpha-D-glucosamine + holo-[ACP] + H(+). The catalysed reaction is UDP-3-O-[(3R)-3-hydroxytetradecanoyl]-alpha-D-glucosamine + (3R)-hydroxytetradecanoyl-[ACP] = UDP-2-N,3-O-bis[(3R)-3-hydroxytetradecanoyl]-alpha-D-glucosamine + holo-[ACP] + H(+). It functions in the pathway glycolipid biosynthesis; lipid IV(A) biosynthesis; lipid IV(A) from (3R)-3-hydroxytetradecanoyl-[acyl-carrier-protein] and UDP-N-acetyl-alpha-D-glucosamine: step 3/6. Catalyzes the N-acylation of UDP-3-O-(hydroxytetradecanoyl)glucosamine using 3-hydroxytetradecanoyl-ACP as the acyl donor. Is involved in the biosynthesis of lipid A, a phosphorylated glycolipid that anchors the lipopolysaccharide to the outer membrane of the cell. This is UDP-3-O-(3-hydroxymyristoyl)glucosamine N-acyltransferase from Salmonella choleraesuis (strain SC-B67).